The primary structure comprises 431 residues: MSNWTPAADQKNQGTLEFEISRAQVEEGLEKAFQRNKNQVSIPGFRKGKVTKALFFSKFGEEALYQEAMDIVLPAAYEAAVEEAGITPVGRPNIEPVSMNKGEAWTLKAEVTTAPAIKLGEYLNLEVAAEDTAVSDADVDAEIKRLQDGQAELVLQEESVKAEDGDTVVIDFDGSVDGDHFDGGQANDFSLALGSGQFIPGFEEQLVGHTAGEDVEVKVTFPEDYQAADLAGKEALFEVKIHELKRKELPELDDEFAKDVDEEVETLAELKEKTAKKLADDKEAAAKSAFEDAVITKAVDNASVDGDAIPDAMIEEDVHRQVDQYLGQLQQQGISREMFFQISGQTEEDLHKQFEEGAATRVKTNLVLEAIVKAEGIEPSAEQVTEEINNLATQYNMDAEQVRSSLSDSLLKHDIAMREVIKKITDSAKAK.

The PPIase FKBP-type domain occupies glycine 165 to proline 250.

Belongs to the FKBP-type PPIase family. Tig subfamily.

It is found in the cytoplasm. The enzyme catalyses [protein]-peptidylproline (omega=180) = [protein]-peptidylproline (omega=0). Involved in protein export. Acts as a chaperone by maintaining the newly synthesized protein in an open conformation. Functions as a peptidyl-prolyl cis-trans isomerase. The chain is Trigger factor from Leuconostoc citreum (strain KM20).